The chain runs to 500 residues: Protein dcd1B (500 aa).

The first 20 residues, 1–20, serve as a signal peptide directing secretion; the sequence is MNLIKLFIICCLLISITVKS. N284, N331, N441, N459, N474, and N475 each carry an N-linked (GlcNAc...) asparagine glycan. The tract at residues 464 to 500 is disordered; sequence FSEQPPLPPPNNSSSSDSNSNSNSDSSSSSDSNSNSN. Over residues 475 to 500 the composition is skewed to low complexity; it reads NSSSSDSNSNSNSDSSSSSDSNSNSN.

The protein resides in the secreted. In Dictyostelium discoideum (Social amoeba), this protein is Protein dcd1B (dcd1B).